Here is a 388-residue protein sequence, read N- to C-terminus: Chorismate synthase (388 aa).

NADP(+) is bound by residues Arg39 and Arg45. FMN-binding positions include 132–134, 251–252, Gly296, 311–315, and Arg337; these read RSS, NA, and KPIPT.

Belongs to the chorismate synthase family. Homotetramer. FMNH2 serves as cofactor.

The catalysed reaction is 5-O-(1-carboxyvinyl)-3-phosphoshikimate = chorismate + phosphate. It participates in metabolic intermediate biosynthesis; chorismate biosynthesis; chorismate from D-erythrose 4-phosphate and phosphoenolpyruvate: step 7/7. Catalyzes the anti-1,4-elimination of the C-3 phosphate and the C-6 proR hydrogen from 5-enolpyruvylshikimate-3-phosphate (EPSP) to yield chorismate, which is the branch point compound that serves as the starting substrate for the three terminal pathways of aromatic amino acid biosynthesis. This reaction introduces a second double bond into the aromatic ring system. The chain is Chorismate synthase from Staphylococcus aureus (strain MRSA252).